Reading from the N-terminus, the 686-residue chain is Pollen receptor-like kinase 5 (686 aa).

Residues 1–39 (MRNWEDPFTLACNTALKKNLPSCIFIIIFISVLCPVAMS) form the signal peptide. Topologically, residues 40 to 283 (QVVVPDSDAD…GKKAGSFYTL (244 aa)) are extracellular. The N-linked (GlcNAc...) asparagine glycan is linked to Asn-60. 5 LRR repeats span residues 112–135 (MKNL…VKRF), 136–159 (TSLK…AFLG), 161–184 (PLLK…LASL), 185–208 (PMLL…QQKD), and 210–230 (KLAS…LRNM). Residues 284 to 304 (AIILIVIGIILVIIALVFCFV) traverse the membrane as a helical segment. The Cytoplasmic portion of the chain corresponds to 305 to 686 (QSRRRNFLSA…DDDFGFSMNR (382 aa)). Residues 328 to 339 (NYHQSTNKNNKP) show a composition bias toward polar residues. Residues 328–355 (NYHQSTNKNNKPAESVNHTRRGSMPDPG) are disordered. The region spanning 375 to 648 (RASAEVLGSG…REVVEMVEML (274 aa)) is the Protein kinase domain. Residue Ser-377 is modified to Phosphoserine. ATP-binding positions include 381–389 (LGSGTFGAS) and Lys-403. Phosphoserine occurs at positions 455 and 458. Residue Thr-472 is modified to Phosphothreonine. Phosphotyrosine is present on Tyr-542. Phosphoserine is present on Ser-545.

This sequence belongs to the protein kinase superfamily. Ser/Thr protein kinase family. Interacts with the GRI peptide. In terms of tissue distribution, expressed in pollen and/or in flowers. Detected at low levels in leaves.

It is found in the cell membrane. It catalyses the reaction L-seryl-[protein] + ATP = O-phospho-L-seryl-[protein] + ADP + H(+). The catalysed reaction is L-threonyl-[protein] + ATP = O-phospho-L-threonyl-[protein] + ADP + H(+). Its function is as follows. Receptor-like kinase involved in the control of pollen germination and pollen tube polar growth. The extracellular domain serves as a sensor for peptides derived from GRI. May act as a downstream element for ROS-dependent cell death induced by GRI. The chain is Pollen receptor-like kinase 5 from Arabidopsis thaliana (Mouse-ear cress).